A 322-amino-acid chain; its full sequence is Helix-loop-helix 34 (322 aa).

Residues M1–K11 show a composition bias toward basic and acidic residues. Residues M1–M23 form a disordered region. The 55-residue stretch at E8–H62 folds into the bHLH domain. PAS domains lie at D82–W152 and P203–G276.

As to quaternary structure, efficient DNA binding requires dimerization with another bHLH protein. In terms of tissue distribution, expressed in a small subset of neurons, probably AVJL and AVJR. Expressed in the AVH neurons.

The protein localises to the nucleus. Functionally, transcription factor. Involved in specifying AVH neuron identity, acting in concert with unc-42. Involved in serotonin-mediated feeding behavior, probably acting by modulating expression of genes involved in glutamate signaling. This chain is Helix-loop-helix 34 (hlh-34), found in Caenorhabditis elegans.